A 246-amino-acid chain; its full sequence is Small ribosomal subunit protein uS2 (246 aa).

This sequence belongs to the universal ribosomal protein uS2 family.

The chain is Small ribosomal subunit protein uS2 from Burkholderia cenocepacia (strain HI2424).